A 205-amino-acid polypeptide reads, in one-letter code: Polyamine-modulated factor 1 (205 aa).

A disordered region spans residues 1–30 (MAEASSANLGSGCEEKRHEGSSSESVPPGT). Residues 141 to 193 (FLQQRDTLRRHVQKQEAENQQLADAVLAGRRQVEELQLQVQAQQQAWQALHRE) are a coiled coil.

In terms of assembly, component of the MIS12 complex composed of MIS12, DSN1, NSL1 and PMF1. Interacts with COPS7A. Interacts via its coiled-coil domain with the leucine-zipper domain of NFE2L2. The interaction with NFE2L2 is required for the transcriptional regulation of SSAT. In terms of tissue distribution, highest levels of expression in heart and skeletal muscle, with significant levels expressed in kidney and liver.

The protein resides in the nucleus. Its subcellular location is the chromosome. The protein localises to the centromere. It is found in the kinetochore. In terms of biological role, part of the MIS12 complex which is required for normal chromosome alignment and segregation and kinetochore formation during mitosis. May act as a cotranscription partner of NFE2L2 involved in regulation of polyamine-induced transcription of SSAT. The chain is Polyamine-modulated factor 1 from Homo sapiens (Human).